The sequence spans 229 residues: MDAVNACGAVAPSHVGRAALLRMLGAQPYVPVWHAMQRFTDVRDATAVDELWVVEHDPVFTLGQAGKLEHVLDPGEIPVVHVDRGGQVTYHGPGQLVVYPLLDLPRLGLGVRDYVYGIEQAVINTLAQWNILGERREHAPGVYVGGAKIAALGIRVRHGCSFHGVAFNVAMDLEPFHRIHPCGYRGLQVTSVLDLGGPSEMDTVAAALLAELARQFCFVLHPTSGWLSS.

Positions 45–220 constitute a BPL/LPL catalytic domain; the sequence is ATAVDELWVV…ELARQFCFVL (176 aa). Substrate-binding positions include 84–91, 151–153, and 164–166; these read RGGQVTYH, ALG, and GVA. Cys182 functions as the Acyl-thioester intermediate in the catalytic mechanism.

The protein belongs to the LipB family.

The protein localises to the cytoplasm. The enzyme catalyses octanoyl-[ACP] + L-lysyl-[protein] = N(6)-octanoyl-L-lysyl-[protein] + holo-[ACP] + H(+). It participates in protein modification; protein lipoylation via endogenous pathway; protein N(6)-(lipoyl)lysine from octanoyl-[acyl-carrier-protein]: step 1/2. Functionally, catalyzes the transfer of endogenously produced octanoic acid from octanoyl-acyl-carrier-protein onto the lipoyl domains of lipoate-dependent enzymes. Lipoyl-ACP can also act as a substrate although octanoyl-ACP is likely to be the physiological substrate. In Xylella fastidiosa (strain 9a5c), this protein is Octanoyltransferase.